Here is a 275-residue protein sequence, read N- to C-terminus: NH(3)-dependent NAD(+) synthetase (275 aa).

46 to 53 (GISGGQDS) contacts ATP. Residue D52 coordinates Mg(2+). R140 contributes to the deamido-NAD(+) binding site. An ATP-binding site is contributed by T160. Position 165 (E165) interacts with Mg(2+). K173 and D180 together coordinate deamido-NAD(+). ATP is bound by residues K189 and T211. Residue 260–261 (HK) participates in deamido-NAD(+) binding.

Belongs to the NAD synthetase family. Homodimer.

It carries out the reaction deamido-NAD(+) + NH4(+) + ATP = AMP + diphosphate + NAD(+) + H(+). Its pathway is cofactor biosynthesis; NAD(+) biosynthesis; NAD(+) from deamido-NAD(+) (ammonia route): step 1/1. Its function is as follows. Catalyzes the ATP-dependent amidation of deamido-NAD to form NAD. Uses ammonia as a nitrogen source. This is NH(3)-dependent NAD(+) synthetase from Escherichia coli O6:K15:H31 (strain 536 / UPEC).